The primary structure comprises 545 residues: Leucine-rich repeat LGI family member 2 (545 aa).

Positions 1-28 (MALRRGGCGALGLLLLLLGAACLIPRSA) are cleaved as a signal peptide. The LRRNT domain occupies 29 to 65 (QVRRLARCPATCSCTKESIICVGSSWVPRIVPGDISS). Asparagine 70 is a glycosylation site (N-linked (GlcNAc...) asparagine). 3 LRR repeats span residues 86-107 (SLQL…AFAG), 110-131 (HLEY…AFRG), and 134-155 (DLTH…VFSD). The LRRCT domain occupies 167-217 (NKFECDCKAKWLYLWLKMTNSTVSDVLCIGPPEYQEKKLNDVTSFDYECTT). Asparagine 186 is a glycosylation site (N-linked (GlcNAc...) asparagine). 7 EAR repeats span residues 219-261 (DFVV…EWDH), 265-307 (NFRS…KYDE), 311-358 (KFVK…KWNS), 360-403 (GFYS…QWNK), 407-450 (KFVP…RWNS), 452-494 (QFVE…QWDK), and 498-540 (LFKK…EHII). Asparagine 271 carries an N-linked (GlcNAc...) asparagine glycan. N-linked (GlcNAc...) asparagine glycosylation occurs at asparagine 402.

Brain, heart and placenta.

It localises to the secreted. Functionally, required for the development of soma-targeting inhibitory GABAergic synapses made by parvalbumin-positive basket cells. This Homo sapiens (Human) protein is Leucine-rich repeat LGI family member 2 (LGI2).